An 82-amino-acid chain; its full sequence is Small ribosomal subunit protein bS18 (82 aa).

Residues M1 to C20 are disordered.

This sequence belongs to the bacterial ribosomal protein bS18 family. Part of the 30S ribosomal subunit. Forms a tight heterodimer with protein bS6.

Its function is as follows. Binds as a heterodimer with protein bS6 to the central domain of the 16S rRNA, where it helps stabilize the platform of the 30S subunit. The protein is Small ribosomal subunit protein bS18 of Chelativorans sp. (strain BNC1).